A 29-amino-acid polypeptide reads, in one-letter code: Cytochrome b6-f complex subunit 8 (29 aa).

A helical membrane pass occupies residues 3–23 (IVGIAWAALMVVFTFSLSLVV).

The protein belongs to the PetN family. In terms of assembly, the 4 large subunits of the cytochrome b6-f complex are cytochrome b6, subunit IV (17 kDa polypeptide, PetD), cytochrome f and the Rieske protein, while the 4 small subunits are PetG, PetL, PetM and PetN. The complex functions as a dimer.

The protein resides in the plastid. It localises to the chloroplast thylakoid membrane. Component of the cytochrome b6-f complex, which mediates electron transfer between photosystem II (PSII) and photosystem I (PSI), cyclic electron flow around PSI, and state transitions. This chain is Cytochrome b6-f complex subunit 8, found in Cryptomeria japonica (Japanese cedar).